A 293-amino-acid chain; its full sequence is Small ribosomal subunit biogenesis GTPase RsgA (293 aa).

One can recognise a CP-type G domain in the interval 63–223; the sequence is KNELVRPPIA…VADTPGFSSL (161 aa). Residues 112 to 115 and 166 to 174 each bind GTP; these read SKMD and GQSGVGKSS. 4 residues coordinate Zn(2+): Cys-247, Cys-252, His-254, and Cys-260.

It belongs to the TRAFAC class YlqF/YawG GTPase family. RsgA subfamily. Monomer. Associates with 30S ribosomal subunit, binds 16S rRNA. Zn(2+) serves as cofactor.

The protein resides in the cytoplasm. One of several proteins that assist in the late maturation steps of the functional core of the 30S ribosomal subunit. Helps release RbfA from mature subunits. May play a role in the assembly of ribosomal proteins into the subunit. Circularly permuted GTPase that catalyzes slow GTP hydrolysis, GTPase activity is stimulated by the 30S ribosomal subunit. The protein is Small ribosomal subunit biogenesis GTPase RsgA of Bacillus cereus (strain ATCC 10987 / NRS 248).